We begin with the raw amino-acid sequence, 491 residues long: Delayed-rectifier potassium channel regulatory subunit KCNS3 (491 aa).

At 1–182 the chain is on the cytoplasmic side; the sequence is MVFGEFFHRP…IRMENPAYCL (182 aa). The chain crosses the membrane as a helical span at residues 183 to 204; sequence SAKLIAISSLSVVLASIVAMCV. The Extracellular portion of the chain corresponds to 205–220; it reads HSMSEFQNEDGEVDDP. The helical transmembrane segment at 221–243 threads the bilayer; the sequence is VLEGVEIACIAWFTGELAVRLAA. At 244 to 254 the chain is on the cytoplasmic side; the sequence is APCQKKFWKNP. The helical transmembrane segment at 255-275 threads the bilayer; sequence LNIIDFVSIIPFYATLAVDTK. Topologically, residues 276-285 are extracellular; that stretch reads EEESEDIENM. A helical; Voltage-sensor transmembrane segment spans residues 286-306; that stretch reads GKVVQILRLMRIFRILKLARH. Topologically, residues 307–321 are cytoplasmic; the sequence is SVGLRSLGATLRHSY. A helical membrane pass occupies residues 322 to 343; it reads HEVGLLLLFLSVGISIFSVLIY. Topologically, residues 344 to 357 are extracellular; it reads SVEKDDHTSSLTSI. The helical intramembrane region spans 358-369; that stretch reads PICWWWATISMT. Residues 370–375 carry the Selectivity filter motif; the sequence is TVGYGD. The stretch at 370-377 is an intramembrane region; that stretch reads TVGYGDTH. Over 378 to 384 the chain is Extracellular; the sequence is PVTLAGK. A helical membrane pass occupies residues 385 to 413; sequence LIASTCIICGILVVALPITIIFNKFSKYY. The Cytoplasmic portion of the chain corresponds to 414–491; sequence QKQKDIDVDQ…TTSLENCTAK (78 aa).

This sequence belongs to the potassium channel family. S (TC 1.A.1.2) subfamily. Kv9.3/KCNS3 sub-subfamily. In terms of assembly, heterotetramer with KCNB1. Does not form homomultimers. In terms of tissue distribution, detected in whole normal term placental and placental chorionic plate arteries and veins. Detected in syncytiotrophoblast and in blood vessel endothelium within intermediate villi and chorionic plate (at protein level). Detected in most tissues, but not in peripheral blood lymphocytes. The highest levels of expression are in lung.

It is found in the cell membrane. Functionally, potassium channel regulatory subunit that modulates the delayed rectifier potassium channel activity of KCNB1 by namely slowing down the deactivation and inactivation time constants. While it does not form functional channel on its own, it can form functional heterotetrameric channels with KCNB1. The polypeptide is Delayed-rectifier potassium channel regulatory subunit KCNS3 (Homo sapiens (Human)).